Consider the following 607-residue polypeptide: Heterocyst differentiation ATP-binding protein HepA (607 aa).

The ABC transmembrane type-1 domain occupies 32–330; sequence AILAVIFSFL…INGTVAFLST (299 aa). The next 5 membrane-spanning stretches (helical) occupy residues 33 to 53, 77 to 97, 163 to 182, 186 to 208, and 290 to 310; these read ILAVIFSFLAASFEGVSIGFL, ILAADAWPIPPIYRISLLILL, FSGLAFVLTRIMTVCVYFVV, ISWQLSIISVLIFLLLAVGLSTL, and IVISFATFTLPVASLLTFFFV. Residues 364–598 form the ABC transporter domain; that stretch reads IDLVSVDFGY…RGKLWKYHQM (235 aa). Position 397–404 (397–404) interacts with ATP; the sequence is GASGAGKT.

Belongs to the ABC transporter superfamily.

The protein localises to the cell inner membrane. Acts early in the process of morphological differentiation of heterocysts. This Nostoc sp. (strain PCC 7120 / SAG 25.82 / UTEX 2576) protein is Heterocyst differentiation ATP-binding protein HepA (hepA).